Consider the following 375-residue polypeptide: Probable G-protein coupled receptor 34 (375 aa).

The Extracellular segment spans residues 1-54 (MTTTSVDSWLCSSHGMHFITNYSDQASQNFSGVPNVTSCPMDEKLLSTVLTTFY). Residues Asn21, Asn29, and Asn35 are each glycosylated (N-linked (GlcNAc...) asparagine). Residues 55 to 75 (SVIFLVGLVGNIIALYVFLGI) traverse the membrane as a helical segment. The Cytoplasmic segment spans residues 76–81 (HRKRNS). A helical membrane pass occupies residues 82–102 (IQIYLLNVAVADLLLIFCLPF). Topologically, residues 103 to 121 (RIMYHINQNKWTLGVILCK) are extracellular. The cysteines at positions 120 and 197 are disulfide-linked. Residues 122-142 (VVGTLFYMNMYISIILLGFIS) traverse the membrane as a helical segment. Over 143 to 164 (LDRYIKINRSIQQRRAITTKQS) the chain is Cytoplasmic. A helical membrane pass occupies residues 165–185 (IYVCCIVWTVALAGFLTMIIL). The Extracellular segment spans residues 186-209 (TLKKGGHNSTMCFHYRDRHNAKGE). Asn193 carries an N-linked (GlcNAc...) asparagine glycan. The chain crosses the membrane as a helical span at residues 210–230 (AIFNFVLVVMFWLIFLLIILS). The Cytoplasmic portion of the chain corresponds to 231 to 262 (YIKIGKNLLRISKRRSKFPNSGKYATTARNSF). A helical membrane pass occupies residues 263–283 (IVLIIFTICFVPYHAFRFIYI). Over 284-303 (SSQLNVSSCYWKEIIHKTNE) the chain is Extracellular. A glycan (N-linked (GlcNAc...) asparagine) is linked at Asn288. A helical membrane pass occupies residues 304–324 (IMLVFSSFNSCLDPVMYFLMS). Topologically, residues 325–375 (SNIRKIMCQLLFRRFQSEASRSESTSEFKPGHSLHDLSVTVKMPQYSTKGN) are cytoplasmic.

The protein belongs to the G-protein coupled receptor 1 family. As to expression, highly expressed in glial cells such as astrocytes and microglia.

The protein localises to the cell membrane. G-protein-coupled receptor of lysophosphatidylserine (LysoPS) that plays different roles in immune response. Acts a damage-sensing receptor that triggers tissue repair upon recognition of dying neutrophils. Mechanistically, apoptotic neutrophils release lysophosphatydilserine that are recognized by type 3 innate lymphoid cells (ILC3s) via GPR34, which activates downstream PI3K-AKT and RAS-ERK signaling pathways leading to STAT3 activation and IL-22 production. Plays an important role in microglial function, controlling morphology and phagocytosis. This is Probable G-protein coupled receptor 34 (Gpr34) from Mus musculus (Mouse).